We begin with the raw amino-acid sequence, 607 residues long: Dihydroxy-acid dehydratase (607 aa).

Position 81 (aspartate 81) interacts with Mg(2+). [2Fe-2S] cluster is bound at residue cysteine 122. 2 residues coordinate Mg(2+): aspartate 123 and lysine 124. Lysine 124 is modified (N6-carboxylysine). Cysteine 195 provides a ligand contact to [2Fe-2S] cluster. Glutamate 489 is a Mg(2+) binding site. The Proton acceptor role is filled by serine 515.

Belongs to the IlvD/Edd family. Homodimer. [2Fe-2S] cluster serves as cofactor. Mg(2+) is required as a cofactor.

The enzyme catalyses (2R)-2,3-dihydroxy-3-methylbutanoate = 3-methyl-2-oxobutanoate + H2O. The catalysed reaction is (2R,3R)-2,3-dihydroxy-3-methylpentanoate = (S)-3-methyl-2-oxopentanoate + H2O. It functions in the pathway amino-acid biosynthesis; L-isoleucine biosynthesis; L-isoleucine from 2-oxobutanoate: step 3/4. It participates in amino-acid biosynthesis; L-valine biosynthesis; L-valine from pyruvate: step 3/4. In terms of biological role, functions in the biosynthesis of branched-chain amino acids. Catalyzes the dehydration of (2R,3R)-2,3-dihydroxy-3-methylpentanoate (2,3-dihydroxy-3-methylvalerate) into 2-oxo-3-methylpentanoate (2-oxo-3-methylvalerate) and of (2R)-2,3-dihydroxy-3-methylbutanoate (2,3-dihydroxyisovalerate) into 2-oxo-3-methylbutanoate (2-oxoisovalerate), the penultimate precursor to L-isoleucine and L-valine, respectively. The sequence is that of Dihydroxy-acid dehydratase from Deinococcus radiodurans (strain ATCC 13939 / DSM 20539 / JCM 16871 / CCUG 27074 / LMG 4051 / NBRC 15346 / NCIMB 9279 / VKM B-1422 / R1).